Consider the following 406-residue polypeptide: Cysteine desulfurase (406 aa).

The residue at position 226 (Lys226) is an N6-(pyridoxal phosphate)lysine. Catalysis depends on Cys364, which acts as the Cysteine persulfide intermediate.

Belongs to the class-V pyridoxal-phosphate-dependent aminotransferase family. Csd subfamily. Homodimer. Interacts with SufE and the SufBCD complex composed of SufB, SufC and SufD. The interaction with SufE is required to mediate the direct transfer of the sulfur atom from the S-sulfanylcysteine. Requires pyridoxal 5'-phosphate as cofactor.

The protein resides in the cytoplasm. The catalysed reaction is (sulfur carrier)-H + L-cysteine = (sulfur carrier)-SH + L-alanine. The enzyme catalyses L-selenocysteine + AH2 = hydrogenselenide + L-alanine + A + H(+). Its pathway is cofactor biosynthesis; iron-sulfur cluster biosynthesis. Cysteine desulfurases mobilize the sulfur from L-cysteine to yield L-alanine, an essential step in sulfur metabolism for biosynthesis of a variety of sulfur-containing biomolecules. Component of the suf operon, which is activated and required under specific conditions such as oxidative stress and iron limitation. Acts as a potent selenocysteine lyase in vitro, that mobilizes selenium from L-selenocysteine. Selenocysteine lyase activity is however unsure in vivo. The sequence is that of Cysteine desulfurase from Yersinia pseudotuberculosis serotype O:1b (strain IP 31758).